A 440-amino-acid chain; its full sequence is D-serine dehydratase (440 aa).

K116 bears the N6-(pyridoxal phosphate)lysine mark.

It belongs to the serine/threonine dehydratase family. DsdA subfamily. In terms of assembly, monomer. Pyridoxal 5'-phosphate serves as cofactor.

It carries out the reaction D-serine = pyruvate + NH4(+). The protein is D-serine dehydratase of Salmonella typhi.